The sequence spans 215 residues: ATP-dependent dethiobiotin synthetase BioD (215 aa).

13 to 18 (DIGKTV) serves as a coordination point for ATP. Thr17 lines the Mg(2+) pocket. Lys38 is a catalytic residue. Thr42 lines the substrate pocket. Residues Asp50, 115-118 (EGAG), and 175-176 (NH) contribute to the ATP site. Mg(2+)-binding residues include Asp50 and Glu115.

The protein belongs to the dethiobiotin synthetase family. As to quaternary structure, homodimer. Requires Mg(2+) as cofactor.

It is found in the cytoplasm. The catalysed reaction is (7R,8S)-7,8-diammoniononanoate + CO2 + ATP = (4R,5S)-dethiobiotin + ADP + phosphate + 3 H(+). It participates in cofactor biosynthesis; biotin biosynthesis; biotin from 7,8-diaminononanoate: step 1/2. In terms of biological role, catalyzes a mechanistically unusual reaction, the ATP-dependent insertion of CO2 between the N7 and N8 nitrogen atoms of 7,8-diaminopelargonic acid (DAPA, also called 7,8-diammoniononanoate) to form a ureido ring. The chain is ATP-dependent dethiobiotin synthetase BioD from Neisseria meningitidis serogroup C (strain 053442).